The primary structure comprises 363 residues: Ferrochelatase (363 aa).

2 residues coordinate Fe cation: His209 and Glu290.

This sequence belongs to the ferrochelatase family.

The protein localises to the cytoplasm. The enzyme catalyses heme b + 2 H(+) = protoporphyrin IX + Fe(2+). The protein operates within porphyrin-containing compound metabolism; protoheme biosynthesis; protoheme from protoporphyrin-IX: step 1/1. Catalyzes the ferrous insertion into protoporphyrin IX. This chain is Ferrochelatase, found in Azoarcus sp. (strain BH72).